A 958-amino-acid chain; its full sequence is Coiled-coil domain-containing protein 33 (958 aa).

Positions Ser214 to Ala353 constitute a C2 domain. Over residues Ser602 to Pro617 the composition is skewed to polar residues. A disordered region spans residues Ser602 to Glu628. Coiled coils occupy residues Asp632–Arg774 and Phe859–Glu899. Residues Glu899–Thr958 are disordered. Composition is skewed to polar residues over residues Pro907–Thr920 and Gln949–Thr958.

This chain is Coiled-coil domain-containing protein 33 (CCDC33), found in Homo sapiens (Human).